The primary structure comprises 1604 residues: Metabotropic glutamate receptor-like protein R (1604 aa).

Positions methionine 1–cysteine 27 are cleaved as a signal peptide. Topologically, residues asparagine 28–lysine 1149 are extracellular. Residues asparagine 38–asparagine 69 are compositionally biased toward low complexity. A disordered region spans residues asparagine 38–asparagine 72. Residues aspartate 98–lysine 133 are a coiled coil. Residues asparagine 213–asparagine 263 are disordered. Asparagine 285, asparagine 327, asparagine 359, asparagine 375, asparagine 489, asparagine 498, asparagine 525, asparagine 577, asparagine 593, asparagine 624, asparagine 768, asparagine 837, asparagine 841, asparagine 851, asparagine 864, asparagine 876, asparagine 885, asparagine 888, asparagine 913, asparagine 967, asparagine 991, asparagine 1097, and asparagine 1109 each carry an N-linked (GlcNAc...) asparagine glycan. A helical membrane pass occupies residues isoleucine 1150 to threonine 1170. The Cytoplasmic segment spans residues phenylalanine 1171–proline 1184. A helical transmembrane segment spans residues valine 1185–phenylalanine 1205. The Extracellular segment spans residues serine 1206–threonine 1211. The helical transmembrane segment at cysteine 1212 to isoleucine 1232 threads the bilayer. At lysine 1233–tyrosine 1256 the chain is on the cytoplasmic side. Residues leucine 1257–isoleucine 1277 traverse the membrane as a helical segment. Residues alanine 1278–tyrosine 1304 are Extracellular-facing. A helical membrane pass occupies residues isoleucine 1305–valine 1325. Topologically, residues isoleucine 1326–glutamate 1340 are cytoplasmic. Residues phenylalanine 1341–isoleucine 1361 traverse the membrane as a helical segment. Residues glycine 1362–aspartate 1372 lie on the Extracellular side of the membrane. Residues phenylalanine 1373–alanine 1393 traverse the membrane as a helical segment. Residues proline 1394–aspartate 1604 are Cytoplasmic-facing. The tract at residues threonine 1457–aspartate 1604 is disordered. Low complexity-rich tracts occupy residues phenylalanine 1471–asparagine 1527 and serine 1534–serine 1556. The segment covering asparagine 1563–serine 1572 has biased composition (basic residues). Residues leucine 1573 to proline 1584 are compositionally biased toward polar residues.

It belongs to the G-protein coupled receptor 3 family. GABA-B receptor subfamily.

It localises to the membrane. This Dictyostelium discoideum (Social amoeba) protein is Metabotropic glutamate receptor-like protein R (grlR).